The primary structure comprises 209 residues: Uracil phosphoribosyltransferase (209 aa).

Residues arginine 79, arginine 104, and aspartate 131–serine 139 each bind 5-phospho-alpha-D-ribose 1-diphosphate. Uracil is bound by residues isoleucine 194 and glycine 199–alanine 201. Aspartate 200 lines the 5-phospho-alpha-D-ribose 1-diphosphate pocket.

This sequence belongs to the UPRTase family. The cofactor is Mg(2+).

The enzyme catalyses UMP + diphosphate = 5-phospho-alpha-D-ribose 1-diphosphate + uracil. Its pathway is pyrimidine metabolism; UMP biosynthesis via salvage pathway; UMP from uracil: step 1/1. With respect to regulation, allosterically activated by GTP. Functionally, catalyzes the conversion of uracil and 5-phospho-alpha-D-ribose 1-diphosphate (PRPP) to UMP and diphosphate. In Bacillus licheniformis (strain ATCC 14580 / DSM 13 / JCM 2505 / CCUG 7422 / NBRC 12200 / NCIMB 9375 / NCTC 10341 / NRRL NRS-1264 / Gibson 46), this protein is Uracil phosphoribosyltransferase.